A 65-amino-acid chain; its full sequence is Venom protein Vn4.6 (65 aa).

A signal peptide spans M1–A23.

Contains 2 disulfide bonds. Expressed by the venom gland.

The protein localises to the secreted. In terms of biological role, endoparasitoid venom protein that interferes with the activation of host hemolymph prophenoloxidase. May act in conjunction with other venom proteins (such as Vn50), by competitive binding to the zymogen and thereby interrupting the enzyme. This chain is Venom protein Vn4.6, found in Cotesia rubecula (Cabbage white butterfly parasite).